The primary structure comprises 387 residues: 3-ketoacyl-CoA thiolase (387 aa).

The active-site Acyl-thioester intermediate is Cys-91. Active-site proton acceptor residues include His-343 and Cys-373.

Belongs to the thiolase-like superfamily. Thiolase family. As to quaternary structure, heterotetramer of two alpha chains (FadB) and two beta chains (FadA).

The protein localises to the cytoplasm. The catalysed reaction is an acyl-CoA + acetyl-CoA = a 3-oxoacyl-CoA + CoA. The protein operates within lipid metabolism; fatty acid beta-oxidation. Its function is as follows. Catalyzes the final step of fatty acid oxidation in which acetyl-CoA is released and the CoA ester of a fatty acid two carbons shorter is formed. The protein is 3-ketoacyl-CoA thiolase of Shewanella baltica (strain OS185).